A 366-amino-acid polypeptide reads, in one-letter code: Peptide chain release factor 2 (366 aa).

Q251 is modified (N5-methylglutamine).

It belongs to the prokaryotic/mitochondrial release factor family. Post-translationally, methylated by PrmC. Methylation increases the termination efficiency of RF2.

It localises to the cytoplasm. Peptide chain release factor 2 directs the termination of translation in response to the peptide chain termination codons UGA and UAA. This Listeria monocytogenes serovar 1/2a (strain ATCC BAA-679 / EGD-e) protein is Peptide chain release factor 2 (prfB).